A 554-amino-acid chain; its full sequence is Propanediol dehydratase large subunit (554 aa).

The protein belongs to the diol/glycerol dehydratase large subunit family. As to quaternary structure, the propanediol dehydratase enzyme is a heterotrimeric complex composed of a large (PduC), a medium (PduD) and a small (PduE) subunit. Requires adenosylcob(III)alamin as cofactor.

The protein resides in the bacterial microcompartment. The enzyme catalyses propane-1,2-diol = propanal + H2O. The protein operates within polyol metabolism; 1,2-propanediol degradation. Its activity is regulated as follows. Inhibited by glycerol. Its function is as follows. Part of the PduCDE complex that catalyzes the dehydration of 1,2-propanediol (1,2-PD) to propionaldehyde. Required for S.typhimurium growth on 1,2-PD as the sole carbon and energy source. This subunit is directly targeted to the BMC. The 1,2-PD-specific bacterial microcompartment (BMC) concentrates low levels of 1,2-PD catabolic enzymes, concentrates volatile reaction intermediates thus enhancing pathway flux and keeps the level of toxic, mutagenic propionaldehyde low. This Salmonella typhimurium (strain LT2 / SGSC1412 / ATCC 700720) protein is Propanediol dehydratase large subunit.